A 112-amino-acid chain; its full sequence is ATP synthase epsilon chain (112 aa).

The protein belongs to the ATPase epsilon chain family. F-type ATPases have 2 components, CF(1) - the catalytic core - and CF(0) - the membrane proton channel. CF(1) has five subunits: alpha(3), beta(3), gamma(1), delta(1), epsilon(1). CF(0) has three main subunits: a, b and c.

It is found in the cell inner membrane. Produces ATP from ADP in the presence of a proton gradient across the membrane. The sequence is that of ATP synthase epsilon chain (atpC) from Rickettsia prowazekii (strain Madrid E).